The sequence spans 231 residues: Large ribosomal subunit protein uL1 (231 aa).

Belongs to the universal ribosomal protein uL1 family. In terms of assembly, part of the 50S ribosomal subunit.

In terms of biological role, binds directly to 23S rRNA. The L1 stalk is quite mobile in the ribosome, and is involved in E site tRNA release. Functionally, protein L1 is also a translational repressor protein, it controls the translation of the L11 operon by binding to its mRNA. This chain is Large ribosomal subunit protein uL1, found in Carboxydothermus hydrogenoformans (strain ATCC BAA-161 / DSM 6008 / Z-2901).